The primary structure comprises 105 residues: Probable non-functional immunoglobulin lambda variable 5-48 (105 aa).

Positions 1–19 (MAWTPLLLLFLSHCTGSLS) are cleaved as a signal peptide. The tract at residues 20–44 (QAVLTQPTSLSASPGASARLTCTLR) is framework-1. The Ig-like domain maps to 20–105 (QAVLTQPTSL…NAGILFISGL (86 aa)). The tract at residues 45–53 (SGISVGSYR) is complementarity-determining-1. Residues 54–70 (IYWYQQKPGSPPRYLLN) form a framework-2 region. Residues 71–77 (YYSDSDK) are complementarity-determining-2. The tract at residues 78–105 (HQGSGVPSRFSGSKDASTNAGILFISGL) is framework-3.

As to quaternary structure, immunoglobulins are composed of two identical heavy chains and two identical light chains; disulfide-linked.

It is found in the secreted. Its subcellular location is the cell membrane. Its function is as follows. Probable non-functional open reading frame (ORF) of V region of the variable domain of immunoglobulin light chains. Non-functional ORF generally cannot participate in the synthesis of a productive immunoglobulin chain due to altered V-(D)-J or switch recombination and/or splicing site (at mRNA level) and/or conserved amino acid change (protein level). Immunoglobulins, also known as antibodies, are membrane-bound or secreted glycoproteins produced by B lymphocytes. In the recognition phase of humoral immunity, the membrane-bound immunoglobulins serve as receptors which, upon binding of a specific antigen, trigger the clonal expansion and differentiation of B lymphocytes into immunoglobulins-secreting plasma cells. Secreted immunoglobulins mediate the effector phase of humoral immunity, which results in the elimination of bound antigens. The antigen binding site is formed by the variable domain of one heavy chain, together with that of its associated light chain. Thus, each immunoglobulin has two antigen binding sites with remarkable affinity for a particular antigen. The variable domains are assembled by a process called V-(D)-J rearrangement and can then be subjected to somatic hypermutations which, after exposure to antigen and selection, allow affinity maturation for a particular antigen. The protein is Probable non-functional immunoglobulin lambda variable 5-48 of Homo sapiens (Human).